Reading from the N-terminus, the 502-residue chain is Glycerol kinase (502 aa).

An ADP-binding site is contributed by threonine 14. Residues threonine 14, threonine 15, and serine 16 each coordinate ATP. Threonine 14 provides a ligand contact to sn-glycerol 3-phosphate. Arginine 18 is an ADP binding site. Sn-glycerol 3-phosphate-binding residues include arginine 84, glutamate 85, tyrosine 136, and aspartate 246. 5 residues coordinate glycerol: arginine 84, glutamate 85, tyrosine 136, aspartate 246, and glutamine 247. 2 residues coordinate ADP: threonine 268 and glycine 311. The ATP site is built by threonine 268, glycine 311, glutamine 315, and glycine 412. ADP-binding residues include glycine 412 and asparagine 416.

The protein belongs to the FGGY kinase family. In terms of assembly, homotetramer and homodimer (in equilibrium). Heterodimer with EIIA-Glc. Binds 1 zinc ion per glycerol kinase EIIA-Glc dimer. The zinc ion is important for dimerization.

It carries out the reaction glycerol + ATP = sn-glycerol 3-phosphate + ADP + H(+). The protein operates within polyol metabolism; glycerol degradation via glycerol kinase pathway; sn-glycerol 3-phosphate from glycerol: step 1/1. With respect to regulation, activity of this regulatory enzyme is affected by several metabolites. Allosterically and non-competitively inhibited by fructose 1,6-bisphosphate (FBP) and unphosphorylated phosphocarrier protein EIIA-Glc (III-Glc), an integral component of the bacterial phosphotransferase (PTS) system. Functionally, key enzyme in the regulation of glycerol uptake and metabolism. Catalyzes the phosphorylation of glycerol to yield sn-glycerol 3-phosphate. This is Glycerol kinase from Shigella dysenteriae serotype 1 (strain Sd197).